A 128-amino-acid chain; its full sequence is Glycine cleavage system H protein (128 aa).

One can recognise a Lipoyl-binding domain in the interval 22–104 (VATVGITEHA…YGEGWIFKMK (83 aa)). The residue at position 63 (Lys-63) is an N6-lipoyllysine.

The protein belongs to the GcvH family. The glycine cleavage system is composed of four proteins: P, T, L and H. Requires (R)-lipoate as cofactor.

Its function is as follows. The glycine cleavage system catalyzes the degradation of glycine. The H protein shuttles the methylamine group of glycine from the P protein to the T protein. This chain is Glycine cleavage system H protein, found in Methylacidiphilum infernorum (isolate V4) (Methylokorus infernorum (strain V4)).